The chain runs to 831 residues: Intraflagellar transport protein 88 (831 aa).

TPR repeat units lie at residues 68 to 101 (IFKL…EQKV), 120 to 153 (TCIW…AEGA), 156 to 189 (AQIR…ASPS), 248 to 281 (FDPL…SILI), 492 to 525 (RGVH…DPYD), 526 to 559 (SFAH…NMES), 560 to 593 (VQAT…LPSY), 595 to 627 (DAIY…FSAV), 632 to 665 (PSIY…VPFS), 666 to 699 (LAVI…DTTT), and 700 to 733 (PKWS…FPTN). Positions 785–816 (RRNSVAAVGPGSRAGQDRFEASNNRVSSNTGD) are disordered. Positions 805–815 (ASNNRVSSNTG) are enriched in polar residues.

The protein localises to the cell projection. Its subcellular location is the cilium. The protein resides in the flagellum. It localises to the cytoplasm. It is found in the cytoskeleton. The protein localises to the flagellum axoneme. Its subcellular location is the flagellum basal body. Its function is as follows. Component of the intraflagellar transport complex B (IFT-B) involved in flagellar assembly. This chain is Intraflagellar transport protein 88, found in Giardia intestinalis (strain ATCC 50803 / WB clone C6) (Giardia lamblia).